Here is an 822-residue protein sequence, read N- to C-terminus: Tubulin polyglutamylase TTLL6 (822 aa).

Residues 1 to 24 (MLQCLTSESEEGAEEREESSTEDL) form a disordered region. The segment covering 8–24 (ESEEGAEEREESSTEDL) has biased composition (acidic residues). The 344-residue stretch at 57–400 (KKRLVINLSN…GNCDKKKVLE (344 aa)) folds into the TTL domain. ATP-binding positions include Lys174, 180-181 (QG), 202-205 (QLYI), and 215-217 (KFD). Gln180 lines the a protein pocket. Arg241 is a binding site for L-glutamate. 263 to 264 (TN) contributes to the ATP binding site. The L-glutamate site is built by Tyr265, Ser266, and Lys283. 3 residues coordinate Mg(2+): Asp346, Glu359, and Asn361. His362 contacts a protein. Residues 371–450 (KLDKEVKDSL…CGGFRLIYPG (80 aa)) are c-MTBD region. L-glutamate is bound at residue Lys377. 2 disordered regions span residues 736–772 (PLFPAPKSQYPTLSKERCPHSRSSSRKKEMNSPSVFV) and 791–822 (TQARLDPRPSRSHSGTTTRDSSTQDPKHTATA). Residues 802–814 (SHSGTTTRDSSTQ) show a composition bias toward polar residues.

The protein belongs to the tubulin--tyrosine ligase family. Found in a complex with CEP41. The cofactor is Mg(2+). As to expression, highly expressed in testis. Expressed in brain, heart, kidney, liver, lung, muscle and trachea. In the brain, specifically expressed in ependymal cilia.

The protein localises to the cytoplasm. The protein resides in the cytoskeleton. Its subcellular location is the cilium axoneme. It localises to the cilium basal body. The enzyme catalyses L-glutamyl-[protein] + L-glutamate + ATP = gamma-L-glutamyl-L-glutamyl-[protein] + ADP + phosphate + H(+). The catalysed reaction is (L-glutamyl)(n)-gamma-L-glutamyl-L-glutamyl-[protein] + L-glutamate + ATP = (L-glutamyl)(n+1)-gamma-L-glutamyl-L-glutamyl-[protein] + ADP + phosphate + H(+). Functionally, polyglutamylase which modifies both tubulin and non-tubulin proteins, generating alpha-linked polyglutamate side chains on the gamma-carboxyl group of specific glutamate residues of target proteins. Preferentially mediates ATP-dependent long polyglutamate chain elongation over the initiation step of the polyglutamylation reaction. Preferentially modifies the alpha-tubulin tail over a beta-tail. Promotes tubulin polyglutamylation which stimulates spastin/SPAST-mediated microtubule severing, thereby regulating microtubule functions. Mediates microtubule polyglutamylation in primary cilia axoneme which is important for ciliary structural formation and motility. Mediates microtubule polyglutamylation in motile cilia, necessary for the regulation of ciliary coordinated beating. Polyglutamylates non-tubulin protein nucleotidyltransferase CGAS, leading to CGAS DNA-binding inhibition, thereby preventing antiviral defense response. The sequence is that of Tubulin polyglutamylase TTLL6 from Mus musculus (Mouse).